We begin with the raw amino-acid sequence, 254 residues long: DNA repair protein RecO (254 aa).

This sequence belongs to the RecO family.

Functionally, involved in DNA repair and RecF pathway recombination. This is DNA repair protein RecO from Anaeromyxobacter dehalogenans (strain 2CP-C).